The primary structure comprises 172 residues: ATP synthase subunit b (172 aa).

The helical transmembrane segment at 27–47 (LAIVIFGLYKFLPPFIGGILE) threads the bilayer.

It belongs to the ATPase B chain family. F-type ATPases have 2 components, F(1) - the catalytic core - and F(0) - the membrane proton channel. F(1) has five subunits: alpha(3), beta(3), gamma(1), delta(1), epsilon(1). F(0) has four main subunits: a(1), b(1), b'(1) and c(10-14). The alpha and beta chains form an alternating ring which encloses part of the gamma chain. F(1) is attached to F(0) by a central stalk formed by the gamma and epsilon chains, while a peripheral stalk is formed by the delta, b and b' chains.

It is found in the cellular thylakoid membrane. Functionally, f(1)F(0) ATP synthase produces ATP from ADP in the presence of a proton or sodium gradient. F-type ATPases consist of two structural domains, F(1) containing the extramembraneous catalytic core and F(0) containing the membrane proton channel, linked together by a central stalk and a peripheral stalk. During catalysis, ATP synthesis in the catalytic domain of F(1) is coupled via a rotary mechanism of the central stalk subunits to proton translocation. In terms of biological role, component of the F(0) channel, it forms part of the peripheral stalk, linking F(1) to F(0). The chain is ATP synthase subunit b from Prochlorococcus marinus (strain MIT 9313).